Consider the following 588-residue polypeptide: Actin-histidine N-methyltransferase (588 aa).

The segment at 1–25 (MGKKSRVKTQKSGTGATASVSPKET) is disordered. The segment covering 10 to 25 (QKSGTGATASVSPKET) has biased composition (polar residues). Residues Arg75, 104 to 106 (EGF), Arg254, 275 to 279 (DMCNH), and 325 to 327 (SGF) each bind S-adenosyl-L-methionine. The SET domain maps to 94–314 (EGFEMVNFKE…AGEQIYIFYG (221 aa)). Residues 546 to 588 (VNGENSIPNGTRSGKENFNQEGSERATEGTKESSSDSTAGARE) are disordered. Over residues 548–566 (GENSIPNGTRSGKENFNQE) the composition is skewed to polar residues. Residues 567-579 (GSERATEGTKESS) are compositionally biased toward basic and acidic residues.

Belongs to the class V-like SAM-binding methyltransferase superfamily. SETD3 actin-histidine methyltransferase family. In terms of assembly, interacts with MYOD1. In terms of processing, phosphorylated by GSK3B, which is required for recognition by the SCF(FBXW7) complex and subsequent degradation. Post-translationally, ubiquitinated by the SCF(FBXW7) complex following phosphorylation by GSK3B, leading to its degradation by the proteasome.

The protein localises to the cytoplasm. It is found in the nucleus. The enzyme catalyses L-histidyl-[protein] + S-adenosyl-L-methionine = N(tele)-methyl-L-histidyl-[protein] + S-adenosyl-L-homocysteine + H(+). Protein-histidine N-methyltransferase that specifically mediates 3-methylhistidine (tele-methylhistidine) methylation of actin at 'His-73'. Histidine methylation of actin is required for smooth muscle contraction of the laboring uterus during delivery. Does not have protein-lysine N-methyltransferase activity and probably only catalyzes histidine methylation of actin. This Canis lupus familiaris (Dog) protein is Actin-histidine N-methyltransferase.